The chain runs to 319 residues: Taste receptor type 2 member 39 (319 aa).

At 1 to 16 (MAQPSNYWKQDVLPLS) the chain is on the extracellular side. Residues 17-37 (ILMLTLVATECTIGIIASGIV) form a helical membrane-spanning segment. The Cytoplasmic portion of the chain corresponds to 38–65 (MAVNAVSWVQKKAISITTRILLLLSVSR). A helical transmembrane segment spans residues 66 to 86 (IGLQSIMLIEITSSIFNVAFY). Topologically, residues 87–97 (NSVLYRVSNVS) are extracellular. Asn-95 carries N-linked (GlcNAc...) asparagine glycosylation. Residues 98–118 (FVFLNYCSLWFAALLSFFHFV) form a helical membrane-spanning segment. Residues 119 to 137 (KIANFSYPLFFKLKWRISE) are Cytoplasmic-facing. The helical transmembrane segment at 138 to 158 (LMPWLLWLSVFISFSSSMFFS) threads the bilayer. At 159-194 (KHKFTVNNNNSLSNNICNFTMKLYVVETNVVNVSFL) the chain is on the extracellular side. Residues Asn-167, Asn-176, and Asn-190 are each glycosylated (N-linked (GlcNAc...) asparagine). A helical transmembrane segment spans residues 195 to 215 (FISGILPPLTMFVATATLLIF). Topologically, residues 216 to 247 (SLRRHTLNMRNSATGSRNPCIEAHMQAIKETS) are cytoplasmic. The helical transmembrane segment at 248-268 (CFLFLYILNAAALLLSTSNIV) threads the bilayer. Topologically, residues 269–273 (DASLF) are extracellular. Residues 274–294 (WSIVIRIVLPVYPAGHSVLLI) traverse the membrane as a helical segment. Residues 295–319 (QNNPGLRRTWKHLQSQIHLYLQNRF) lie on the Cytoplasmic side of the membrane.

Belongs to the G-protein coupled receptor T2R family.

The protein resides in the membrane. In terms of biological role, putative taste receptor which may play a role in the perception of bitterness. The chain is Taste receptor type 2 member 39 (Tas2r39) from Mus musculus (Mouse).